The primary structure comprises 76 residues: FMRFamide-related neuropeptides (76 aa).

The first 27 residues, 1–27 (MCVQTRMLVAVAVVLVVLAVLSDPVSA), serve as a signal peptide directing secretion. Phe-39 bears the Phenylalanine amide mark.

The protein belongs to the FARP (FMRFamide related peptide) family. Olfactory lobe and accessory lobe, olfactory globular tract, olfactory lobe cells (at protein level). Widely distributed throughout nervous system.

The protein resides in the secreted. GYRKPPFNGSIF-amide may be involved in olfaction and contraction of hindgut. The sequence is that of FMRFamide-related neuropeptides from Procambarus clarkii (Red swamp crayfish).